A 265-amino-acid chain; its full sequence is C-type lectin domain family 12 member A (265 aa).

Residues 1 to 43 (MSEEVTYADLQFQNSSEMEKIPEIGKFGEKAPPAPSHVWRPAA) are Cytoplasmic-facing. Positions 5 to 10 (VTYADL) match the ITIM motif motif. Position 7 is a phosphotyrosine (Y7). Residues 44-64 (LFLTLLCLLLLIGLGVLASMF) traverse the membrane as a helical; Signal-anchor for type II membrane protein segment. Residues 65-265 (HVTLKIEMKK…QLGSTYFREA (201 aa)) lie on the Extracellular side of the membrane. N88 and N98 each carry an N-linked (GlcNAc...) asparagine glycan. 4 cysteine pairs are disulfide-bonded: C118–C130, C133–C144, C161–C248, and C227–C240. A C-type lectin domain is found at 140-249 (HKDSCYFLSD…CTYKKRMICE (110 aa)). N165 carries an N-linked (GlcNAc...) asparagine glycan.

In terms of assembly, homodimer; disulfide-linked. Interacts (when the ITIM motif is phosphorylated) with PTPN6 and PTPN11. Phosphorylated at Tyr-7 by SRC in the ITIM motif following ligand-binding, promoting recruitment of tyrosine-protein phosphatases PTPN6 and PTPN11. Post-translationally, highly N-glycosylated; glycosylation varies between cell types. Preferentially expressed in lymphoid tissues and immune cells, including natural killer (NK) cells, T-cells, dendritic cells and monocytes or macrophages. Detected in spleen macrophage-rich red pulp and in lymph node (at protein level). Detected in peripheral blood leukocytes, dendritic cells, bone marrow, monocytes, mononuclear leukocytes and macrophages.

It localises to the cell membrane. Functionally, myeloid inhibitory C-type lectin receptor that acts as a negative regulator of myeloid cell activation. Myeloid cell inhibition is required to limit proinflammatory pathways and protect against excessive inflammation. Specifically recognizes and binds various structures, such as neutrophil extracellular traps (NETs) or monosodium urate crystals. Also acts as a pattern-recognition receptor for pathogen-associated molecules, such as plasmodium hemozoin or mycobacterial micolic acid. Ligand-binding induces phosphorylation of its ITIM motif, followed by recruitment of tyrosine-protein phosphatases PTPN6 and PTPN11, which counteract tyrosine-protein kinase SYK, thereby preventing myeloid cell activation. Acts as a pattern-recognition receptor for NETs in neutrophils: specifically recognizes DNA in NETs, leading to inhibit neutrophil activation and limit further NET formation. This regulation is essential for controlling key neutrophil responses and limit NET-mediated inflammatory conditions. Also recognizes dead cells by acting as a receptor for monosodium urate crystals, leading to down-regulate neutrophil activation. Binding to monosodium urate crystals also promotes the type I interferon response. Acts as an inhibitor of natural killer (NK) cell cytotoxicity. Also acts as an ihibitor of dendritic cell maturation in an IL10-dependent manner. This Homo sapiens (Human) protein is C-type lectin domain family 12 member A.